The primary structure comprises 201 residues: Recombination protein RecR (201 aa).

The segment at 60–75 adopts a C4-type zinc-finger fold; it reads CRRCGNVDVCDPCTIC. One can recognise a Toprim domain in the interval 83–178; that stretch reads RTLVVVADVG…RVTRLAQGVP (96 aa).

The protein belongs to the RecR family.

May play a role in DNA repair. It seems to be involved in an RecBC-independent recombinational process of DNA repair. It may act with RecF and RecO. The chain is Recombination protein RecR from Xanthobacter autotrophicus (strain ATCC BAA-1158 / Py2).